A 241-amino-acid chain; its full sequence is Protein McbE (241 aa).

6 consecutive transmembrane segments (helical) span residues 17 to 35 (TPFSLIWTIMSPTVLFFFL), 54 to 72 (ISWFVGYISFSVVLFNYCL), 105 to 123 (LIMSILYVFFFILVVLTGF), 131 to 149 (IVMIILKSIYINAFMMVSL), 163 to 181 (STIYSVLITVCMVSGIVSL), and 212 to 230 (LMTIFFYSIMLIISIISAL).

It is found in the cell membrane. Functionally, together with two further proteins McbF and McbG this protein causes immunity to the peptide antibiotic microcin B17 (MccB17), which inhibits DNA replication in enterobacteriaceae. Immunity is determined by two different mechanisms. McbE is involved in the production of extracellular MccB17 and, in a complex with McbF it also serves as 'pump' for the export of active MccB17 from the cytoplasm to the periplasmic space. This Escherichia coli protein is Protein McbE (mcbE).